Consider the following 419-residue polypeptide: UDP-N-acetylglucosamine 1-carboxyvinyltransferase (419 aa).

22–23 provides a ligand contact to phosphoenolpyruvate; that stretch reads KN. Arginine 91 serves as a coordination point for UDP-N-acetyl-alpha-D-glucosamine. The active-site Proton donor is the cysteine 115. Cysteine 115 is subject to 2-(S-cysteinyl)pyruvic acid O-phosphothioketal. UDP-N-acetyl-alpha-D-glucosamine contacts are provided by residues 120–124, 160–163, aspartate 305, and valine 327; these read RPVDL and KVSV.

This sequence belongs to the EPSP synthase family. MurA subfamily.

It localises to the cytoplasm. It carries out the reaction phosphoenolpyruvate + UDP-N-acetyl-alpha-D-glucosamine = UDP-N-acetyl-3-O-(1-carboxyvinyl)-alpha-D-glucosamine + phosphate. It functions in the pathway cell wall biogenesis; peptidoglycan biosynthesis. Functionally, cell wall formation. Adds enolpyruvyl to UDP-N-acetylglucosamine. This Salmonella arizonae (strain ATCC BAA-731 / CDC346-86 / RSK2980) protein is UDP-N-acetylglucosamine 1-carboxyvinyltransferase.